The chain runs to 187 residues: KS71A fimbrillin (187 aa).

The signal sequence occupies residues 1–21 (MIKSVIAGAVAMAVVSFGANA). Cysteines 43 and 82 form a disulfide.

This sequence belongs to the fimbrial protein family.

The protein localises to the fimbrium. Its function is as follows. Fimbriae (also called pili), polar filaments radiating from the surface of the bacterium to a length of 0.5-1.5 micrometers and numbering 100-300 per cell, enable bacteria to colonize the epithelium of specific host organs. The protein is KS71A fimbrillin (KS71A) of Escherichia coli.